The sequence spans 543 residues: Protein lin-14 (543 aa).

2 disordered regions span residues 165–228 and 268–291; these read PNGH…SSNH and APAT…PRKP. A compositionally biased stretch (polar residues) spans 177-213; it reads SMQTDEQQVKWSSPSSVDSNGQKTDSSAASAGDNQNI. Positions 268-282 are enriched in low complexity; the sequence is APATNGTTNGATKAA.

Cleaved by caspase ced-3 in vitro.

The protein resides in the nucleus. Heterochronic protein which controls the choice of stage specific cell fates. Involved in the temporal progression of vulval fate patterning, possibly by inhibiting lin-12. Acts as a transcription factor involved in the stage-specific repression of insulin/insulin-like growth factor gene ins-33. The polypeptide is Protein lin-14 (lin-14) (Caenorhabditis briggsae).